Reading from the N-terminus, the 394-residue chain is S-adenosylmethionine synthase 1 (394 aa).

Glutamate 11 contacts Mg(2+). Histidine 17 serves as a coordination point for ATP. Glutamate 45 provides a ligand contact to K(+). L-methionine is bound by residues glutamate 58 and glutamine 101. ATP contacts are provided by residues 169-171 (DGK), 237-240 (SGRF), aspartate 248, 254-255 (RK), alanine 271, lysine 275, and lysine 279. Aspartate 248 lines the L-methionine pocket. An L-methionine-binding site is contributed by lysine 279.

It belongs to the AdoMet synthase family. As to quaternary structure, homotetramer. Mn(2+) is required as a cofactor. Requires Mg(2+) as cofactor. Co(2+) serves as cofactor. It depends on K(+) as a cofactor.

Its subcellular location is the cytoplasm. It carries out the reaction L-methionine + ATP + H2O = S-adenosyl-L-methionine + phosphate + diphosphate. It functions in the pathway amino-acid biosynthesis; S-adenosyl-L-methionine biosynthesis; S-adenosyl-L-methionine from L-methionine: step 1/1. Catalyzes the formation of S-adenosylmethionine from methionine and ATP. The reaction comprises two steps that are both catalyzed by the same enzyme: formation of S-adenosylmethionine (AdoMet) and triphosphate, and subsequent hydrolysis of the triphosphate. This chain is S-adenosylmethionine synthase 1 (SAM1), found in Hordeum vulgare (Barley).